Reading from the N-terminus, the 363-residue chain is Carbamoyl phosphate synthase small chain (363 aa).

Residues 1-172 (MKAFLVLDNG…TKYIFGTHTG (172 aa)) form a CPSase region. S45, G224, and G226 together coordinate L-glutamine. In terms of domain architecture, Glutamine amidotransferase type-1 spans 176–362 (KLAVYDYGVK…YDLVETTKRG (187 aa)). C252 (nucleophile) is an active-site residue. L-glutamine is bound by residues L253, Q256, N294, G296, and F297. Catalysis depends on residues H335 and E337.

Belongs to the CarA family. Composed of two chains; the small (or glutamine) chain promotes the hydrolysis of glutamine to ammonia, which is used by the large (or ammonia) chain to synthesize carbamoyl phosphate. Tetramer of heterodimers (alpha,beta)4.

The enzyme catalyses hydrogencarbonate + L-glutamine + 2 ATP + H2O = carbamoyl phosphate + L-glutamate + 2 ADP + phosphate + 2 H(+). It carries out the reaction L-glutamine + H2O = L-glutamate + NH4(+). Its pathway is amino-acid biosynthesis; L-arginine biosynthesis; carbamoyl phosphate from bicarbonate: step 1/1. It participates in pyrimidine metabolism; UMP biosynthesis via de novo pathway; (S)-dihydroorotate from bicarbonate: step 1/3. Its function is as follows. Small subunit of the glutamine-dependent carbamoyl phosphate synthetase (CPSase). CPSase catalyzes the formation of carbamoyl phosphate from the ammonia moiety of glutamine, carbonate, and phosphate donated by ATP, constituting the first step of 2 biosynthetic pathways, one leading to arginine and/or urea and the other to pyrimidine nucleotides. The small subunit (glutamine amidotransferase) binds and cleaves glutamine to supply the large subunit with the substrate ammonia. The sequence is that of Carbamoyl phosphate synthase small chain from Leptospira borgpetersenii serovar Hardjo-bovis (strain L550).